We begin with the raw amino-acid sequence, 301 residues long: Phosphatidylserine decarboxylase proenzyme (301 aa).

Catalysis depends on charge relay system; for autoendoproteolytic cleavage activity residues D117, H173, and S260. The active-site Schiff-base intermediate with substrate; via pyruvic acid; for decarboxylase activity is S260. S260 carries the pyruvic acid (Ser); by autocatalysis modification.

This sequence belongs to the phosphatidylserine decarboxylase family. PSD-B subfamily. Prokaryotic type II sub-subfamily. As to quaternary structure, heterodimer of a large membrane-associated beta subunit and a small pyruvoyl-containing alpha subunit. Pyruvate is required as a cofactor. Is synthesized initially as an inactive proenzyme. Formation of the active enzyme involves a self-maturation process in which the active site pyruvoyl group is generated from an internal serine residue via an autocatalytic post-translational modification. Two non-identical subunits are generated from the proenzyme in this reaction, and the pyruvate is formed at the N-terminus of the alpha chain, which is derived from the carboxyl end of the proenzyme. The autoendoproteolytic cleavage occurs by a canonical serine protease mechanism, in which the side chain hydroxyl group of the serine supplies its oxygen atom to form the C-terminus of the beta chain, while the remainder of the serine residue undergoes an oxidative deamination to produce ammonia and the pyruvoyl prosthetic group on the alpha chain. During this reaction, the Ser that is part of the protease active site of the proenzyme becomes the pyruvoyl prosthetic group, which constitutes an essential element of the active site of the mature decarboxylase.

The protein localises to the cell membrane. The enzyme catalyses a 1,2-diacyl-sn-glycero-3-phospho-L-serine + H(+) = a 1,2-diacyl-sn-glycero-3-phosphoethanolamine + CO2. It participates in phospholipid metabolism; phosphatidylethanolamine biosynthesis; phosphatidylethanolamine from CDP-diacylglycerol: step 2/2. Its function is as follows. Catalyzes the formation of phosphatidylethanolamine (PtdEtn) from phosphatidylserine (PtdSer). The sequence is that of Phosphatidylserine decarboxylase proenzyme from Chlamydia trachomatis serovar L2b (strain UCH-1/proctitis).